The chain runs to 837 residues: MWGRLWPLLFSFLTVTAVPGPSLRRPSRELDATPRLTISYEELSQIRHFKGQTQNYSTLLLEEASERLLVGARGALFSLSARDIRDRTHKEIHWEASPEMQSKCHQKGKNNQTECFNHVRFLQRLNATHFYACGTHAFQPLCAAIDAETFILPTSFEEGKEKCPYDPARGFTGLIIDGGLYTATRYEFRSIPDIRRSRHPHSLRTEEAPMHWLNDAEFVFSVLVRESKTSAVGDDDKIYFFFMEREEGSSSFTQSRSSHRVARVARVCKGDLGGKKILQKKWTSFLKARLICHIPQYETLRGVCSLNADTSSHTHFYAVFTLTTQWKTLEASAICRYDLAEIQAVFTGPFMEYQDGARRWGRYEGGVPEPRPGSCITDSLRSRGYNSSQDLPSLVLDFVKLHPLMARPVVPTRGRPLLLKRNVRYTHLTGTHVSTPAGPTYDLLFLGTADGWIHKAVVLGSGMHIIEEIQVFREPQSVDNLVISPMQHSLYVGAASGVLQFPLSSCSRYQSCYDCILARDPYCGWDSSIHACMVATTVANRTELIQDIERGNRGCEGSRDAGPPPPLKTRSVLRGDDVLLPCDQPSNLARALWLLNGSKSLSDGQDGYRVGVDGLLVTDTQLEHSGNYGCYAEENGLRMLLASYSLTVRPATPAPAPQAPATPGAQLAHDMRMFYVVAIAILGGLCLILASSLLYVACLKGGRRGRRRKYSLGRAGRAGGSAVQLQTVSGQCPGEEDEGDDGEGTGGLESGCLQIIPGEGAPAPPPPPPPPPPAELTNGLVALPSRLRRMNGNSYVLLRQSNNGVPAGPCSFAEELSRILEKRKHTQLVEQLDESSV.

The signal sequence occupies residues 1 to 17 (MWGRLWPLLFSFLTVTA). Residues 18–673 (VPGPSLRRPS…GAQLAHDMRM (656 aa)) are Extracellular-facing. Residues 35-503 (RLTISYEELS…AASGVLQFPL (469 aa)) enclose the Sema domain. Asn55, Asn111, and Asn126 each carry an N-linked (GlcNAc...) asparagine glycan. A disulfide bridge connects residues Cys104 and Cys115. 3 cysteine pairs are disulfide-bonded: Cys133/Cys142, Cys268/Cys375, and Cys292/Cys335. Asn386 is a glycosylation site (N-linked (GlcNAc...) asparagine). One can recognise a PSI domain in the interval 505-556 (SCSRYQSCYDCILARDPYCGWDSSIHACMVATTVANRTELIQDIERGNRGCE). 2 cysteine pairs are disulfide-bonded: Cys506/Cys523 and Cys515/Cys532. N-linked (GlcNAc...) asparagine glycans are attached at residues Asn540 and Asn596. The region spanning 565 to 647 (PPLKTRSVLR…RMLLASYSLT (83 aa)) is the Ig-like C2-type domain. The cysteines at positions 582 and 630 are disulfide-linked. The helical transmembrane segment at 674-694 (FYVVAIAILGGLCLILASSLL) threads the bilayer. Over 695 to 837 (YVACLKGGRR…LVEQLDESSV (143 aa)) the chain is Cytoplasmic. The segment at 721-776 (SAVQLQTVSGQCPGEEDEGDDGEGTGGLESGCLQIIPGEGAPAPPPPPPPPPPAEL) is disordered. Residues 734–743 (GEEDEGDDGE) are compositionally biased toward acidic residues. The span at 762–774 (PAPPPPPPPPPPA) shows a compositional bias: pro residues. Residues Ser794 and Ser836 each carry the phosphoserine modification.

The protein belongs to the semaphorin family. As to quaternary structure, interacts with PLXNB2. As to expression, brain, spinal cord, and several sensory organs as well as specific populations of projection neurons.

It localises to the cell membrane. Its function is as follows. Cell surface receptor for PLXNB2. May play a role in axon guidance. The protein is Semaphorin-4G (Sema4g) of Mus musculus (Mouse).